Consider the following 777-residue polypeptide: MEEDLIQPQPDSETLTSPTSEVGAVELVEHEDDERVEQDPGYVTPPKDGKESVPVSPLTEADYLGGEDDVLLKHVLRQSTIVQEAFKDYSGFPLTVEELSRTYEANLFSPRVPPKKQANGTCEPNPRLNFYPVFAVPEALATYHIFFKNQRIPLSCRANRTQGDRILHLKAGAHIPEIVSLEEVPKIFEGLGKDEKRAANALQKSETENQNVLVELDGDNARLAVLKRTIEVSHFAYPALNLPPKVMRSVMDHLLIKRVEPLDSDQPEQNSEDGQPVVSDDDLARWLDSHDPTTLQERRKMMMAVILVTVELECLQRFFANPQTLRKIEESLHYAFRHGYVRQACKISNVELSNLVSYMGILHENRLGQNVLHCTLQGEARRDYVRDCIYLFLILTWQTAMGVWQQCLEERNLRELEKLLVRNRRELWTAFSERTAACQLADLIFPERLMQTLQNGLPDFVSQSILQNFRSFILERSGILPAMSCALPSDFVPLCYRECPPPLWSHCYLLRLANYLAHHSDLMENSSGEGLLECHCRCNLCTPHRSLVCNTELLSETQVIGTFEIQGPERQEGASNLKLTPALWTSAYLRKFIPEDYHAHQIKFYEDQSRPPKAPLTACVITQSQILAQLQAIQQARQEFLLKKGHGVYLDPQTGEELNTPSPSAAASCRPQKHAAQREQASHCGSAVPKATETARAVGRGGGILGRQPGRGSFRRGGNGELGKSRRGAGGQTPQGRGGRNHRQRRGTVFQRTRSEPASDGESRTVPAAARLVESQP.

Disordered regions lie at residues 1-55 (MEED…SVPV) and 261-283 (PLDS…DDDL). Residues 9–20 (QPDSETLTSPTS) show a composition bias toward polar residues. Residues 250 to 314 (VMDHLLIKRV…VILVTVELEC (65 aa)) form a binding to host EIF4G region. The RRM domain maps to 317–435 (RFFANPQTLR…ELWTAFSERT (119 aa)). Tyrosine 334 and tyrosine 649 each carry phosphotyrosine; by host. Residues 652–777 (PQTGEELNTP…AAARLVESQP (126 aa)) are disordered. Residues 656–665 (EELNTPSPSA) show a composition bias toward polar residues. Residues 728-738 (GAGGQTPQGRG) are compositionally biased toward gly residues. Positions 753-763 (TRSEPASDGES) are enriched in basic and acidic residues.

It belongs to the adenoviridae shutoff protein family. As to quaternary structure, monomer. Interacts with hexon protein; this interaction allows chaperoning and trimerization of hexon proteins. Interacts (via N-terminus) with host initiation factor EIF4G (via C-terminus). Interacts (via RRM domain) with viral mRNAs that contain the tripartite leader; this interaction allows ribosome shunting and expression of viral late mRNAs. In terms of processing, might be cleaved by the viral protease. Post-translationally, phosphorylated. Tyrosine phosphorylation enhances preferential binding to tripartite leader mRNAs and allows ribosome shunting. Methylated. Asymmetric dimethylation by host PRMT1 of the Arg/Gly-rich region may regulate shutoff protein binding to hexon and promote the capsid assembly in the nucleus.

The protein resides in the host cytoplasm. In terms of biological role, protein that inhibits host translation while promoting late viral translation by ribosome shunting. Blocks host cap-dependent translation by binding to eIF4G, displacing MKNK1 from cap initiation complexes and preventing EIF4E phosphorylation. Binds to the tripartite leader sequence of viral late mRNAs and recruits host eIF4G, PABPC1/poly-A binding protein and 40S ribosomes subunits on viral mRNAs, allowing ribosome shunting and efficient translation of late viral mRNAs even though conventional translation via ribosome scanning from the cap has been shut off in the host cell. During assembly, acts as a chaperone protein that helps hexon proteins assembly into trimers. This chain is Shutoff protein, found in Homo sapiens (Human).